A 332-amino-acid chain; its full sequence is 2,3-diketo-L-gulonate reductase (332 aa).

His44 functions as the Proton donor in the catalytic mechanism. Residues 168-174, 224-225, and 304-306 each bind NAD(+); these read ITMVDMS, WK, and GHE.

It belongs to the LDH2/MDH2 oxidoreductase family. DlgD subfamily. Homodimer.

Its subcellular location is the cytoplasm. It catalyses the reaction 3-dehydro-L-gulonate + NAD(+) = 2,3-dioxo-L-gulonate + NADH + H(+). The catalysed reaction is 3-dehydro-L-gulonate + NADP(+) = 2,3-dioxo-L-gulonate + NADPH + H(+). Catalyzes the reduction of 2,3-diketo-L-gulonate in the presence of NADH, to form 3-keto-L-gulonate. This Escherichia fergusonii (strain ATCC 35469 / DSM 13698 / CCUG 18766 / IAM 14443 / JCM 21226 / LMG 7866 / NBRC 102419 / NCTC 12128 / CDC 0568-73) protein is 2,3-diketo-L-gulonate reductase.